The primary structure comprises 496 residues: Transcription factor CP2 (496 aa).

Positions 61–300 (ENKILPFQYV…SPGFNSSHSS (240 aa)) constitute a Grh/CP2 DB domain. The DNA-binding stretch occupies residues 133–386 (EHQQLEGWRW…LFNALKGRMV (254 aa)). 2 disordered regions span residues 238–268 (FKPK…YQPS) and 296–327 (SSHS…LLPT). The span at 241–265 (KGADRKQKTDREKMEKRTPHEKEKY) shows a compositional bias: basic and acidic residues.

The protein belongs to the grh/CP2 family. CP2 subfamily. In terms of assembly, component of the SSP (stage selector protein) complex, which appears to be a heteromer of TFCP2 and 2 copies of NFE4. In terms of tissue distribution, expressed in the epiblast at the pre-primitive streak stage. At the primitive streak stage, expressed in the extending primitive streak and in the prospective neural plate. At stages 7 and 8, expressed in the neural folds, somites and in the regressing primitive streak. At stage 12, ubiquitously expressed in the whole embryo.

The protein resides in the nucleus. Binds the B-response element 5'-CAAGTCCAGGCAAGT-3' of the ENS1/ERNI promoter. May be the major transcription activator thus being essential for its expression. This chain is Transcription factor CP2 (TFCP2), found in Gallus gallus (Chicken).